The following is a 214-amino-acid chain: MATTRKPRGGAGGATQPALDFDAPGEIVCGVDEAGRGPLAGPVVAAAVVLDPARPIVGLDDSKALSAKKRERLFDEIVAYALAYSVASASVEEIDSLNILHATMLAMKRAVEGLSVLPTLAKIDGNRCPMLAIRSEAIVGGDALVPSISAASILAKVTRDRMLVELHQQFPMYGFDAHAGYGTPQHLAALREHGPCEHHRRSFAPVREAFDLIR.

One can recognise an RNase H type-2 domain in the interval Glu-26 to Arg-214. The a divalent metal cation site is built by Asp-32, Glu-33, and Asp-124.

The protein belongs to the RNase HII family. It depends on Mn(2+) as a cofactor. Mg(2+) serves as cofactor.

Its subcellular location is the cytoplasm. The catalysed reaction is Endonucleolytic cleavage to 5'-phosphomonoester.. Endonuclease that specifically degrades the RNA of RNA-DNA hybrids. This chain is Ribonuclease HII, found in Burkholderia mallei (strain NCTC 10247).